The following is an 843-amino-acid chain: Complement component C7 (843 aa).

The first 22 residues, 1–22 (MKVISLFILVGFIGEFQSFSSA), serve as a signal peptide directing secretion. The 54-residue stretch at 27–80 (NCQWDFYAPWSECNGCTKTQTRRRSVAVYGQYGGQPCVGNAFETQSCEPTRGCP) folds into the TSP type-1 1 domain. Disulfide bonds link Cys-28-Cys-63, Cys-39-Cys-73, Cys-42-Cys-79, Cys-85-Cys-96, Cys-91-Cys-109, Cys-103-Cys-119, and Cys-128-Cys-165. The C-linked (Man) tryptophan glycan is linked to Trp-36. In terms of domain architecture, LDL-receptor class A spans 83–121 (EGCGERFRCFSGQCISKSLVCNGDSDCDEDSADEDRCED). Residues 108–120 (DCDEDSADEDRCE) are compositionally biased toward acidic residues. Residues 108-143 (DCDEDSADEDRCEDSERRPSCDIDKPPPNIELTGNG) form a disordered region. Residues 121-132 (DSERRPSCDIDK) show a composition bias toward basic and acidic residues. The region spanning 124–456 (RRPSCDIDKP…EYLDEFDPCH (333 aa)) is the MACPF domain. N-linked (GlcNAc...) asparagine glycosylation is present at Asn-202. Residues 219–240 (SRKRSFFRSSSSSSRSYTSHTN) form a disordered region. A compositionally biased stretch (low complexity) spans 225–234 (FRSSSSSSRS). Intrachain disulfides connect Cys-337–Cys-353, Cys-433–Cys-560, Cys-455–Cys-505, Cys-457–Cys-473, Cys-460–Cys-475, Cys-477–Cys-486, Cys-512–Cys-545, Cys-523–Cys-535, Cys-571–Cys-613, Cys-599–Cys-626, Cys-631–Cys-673, and Cys-659–Cys-688. In terms of domain architecture, EGF-like spans 457-487 (CRPCQNGGLATVEGTHCLCHCKPYTFGAACE). A TSP type-1 2 domain is found at 500–549 (DGGWSCWSSWSPCVQGKKTRSRECNNPPPSGGGRSCVGETTESTQCEDEE). Trp-503, Trp-506, and Trp-509 each carry a C-linked (Man) tryptophan; partial glycan. Residues 516-538 (KKTRSRECNNPPPSGGGRSCVGE) are disordered. CCP regions lie at residues 545–615 (CEDE…RCGE) and 616–693 (DLRW…QKEN). 2 Sushi domains span residues 569 to 628 (EFCP…HCQK) and 629 to 690 (IACV…RCVQ). 2 factor I module (FIM) regions span residues 695-770 (LTQA…ASAE) and 771-843 (KACG…AETQ). Thr-696 carries an O-linked (GalNAc...) threonine glycan. Disulfide bonds link Cys-702-Cys-713, Cys-715-Cys-750, Cys-721-Cys-743, Cys-728-Cys-763, Cys-773-Cys-782, Cys-776-Cys-789, Cys-791-Cys-825, Cys-797-Cys-818, and Cys-805-Cys-838. Asn-754 carries an N-linked (GlcNAc...) (complex) asparagine glycan.

This sequence belongs to the complement C6/C7/C8/C9 family. As to quaternary structure, monomer or dimer; as a C5b-7 complex it can also form multimeric rosettes. Component of the membrane attack complex (MAC), composed of complement C5b, C6, C7, C8A, C8B, C8G and multiple copies of the pore-forming subunit C9. C-, N- and O-glycosylated. O-glycosylated with core 1 or possibly core 8 glycans.

The protein resides in the secreted. It localises to the target cell membrane. Its activity is regulated as follows. Membrane attack complex (MAC) assembly is inhibited by CD59, thereby protecting self-cells from damage during complement activation. MAC assembly is also inhibited by clusterin (CLU) chaperones that inhibit polymerization of C9. Functionally, component of the membrane attack complex (MAC), a multiprotein complex activated by the complement cascade, which inserts into a target cell membrane and forms a pore, leading to target cell membrane rupture and cell lysis. The MAC is initiated by proteolytic cleavage of C5 into complement C5b in response to the classical, alternative, lectin and GZMK complement pathways. The complement pathways consist in a cascade of proteins that leads to phagocytosis and breakdown of pathogens and signaling that strengthens the adaptive immune system. C7 serves as a membrane anchor. During MAC assembly, associates with C5b and C6 to form the C5b-7 complex, a key lipophilic precursor of the MAC complex, which associates with the outer leaflet and reduces the energy for membrane bending. The protein is Complement component C7 of Homo sapiens (Human).